The chain runs to 154 residues: Glycosylation-dependent cell adhesion molecule 1 (154 aa).

An N-terminal signal peptide occupies residues 1 to 18; the sequence is MKFLCILLLASLAATSLA. O-linked (GalNAc...) threonine; partial glycosylation occurs at Thr34. A phosphoserine mark is found at Ser48, Ser53, Ser57, Ser59, and Ser65. Positions 51 to 65 are enriched in basic and acidic residues; it reads DLSKEPSISREDLIS. Residues 51–115 form a disordered region; that stretch reads DLSKEPSISR…EHAPSDASTT (65 aa). An N-linked (GlcNAc...) asparagine glycan is attached at Asn96.

The protein belongs to the PP3/GlyCAM-1 family. In terms of tissue distribution, highly and specifically expressed in the lactating mammary gland.

Its subcellular location is the membrane. This chain is Glycosylation-dependent cell adhesion molecule 1 (GLYCAM1), found in Capra hircus (Goat).